A 248-amino-acid chain; its full sequence is Pulmonary surfactant-associated protein A (248 aa).

A signal peptide spans Met1 to Cys20. The region spanning Gly31–Pro100 is the Collagen-like domain. A disordered region spans residues Pro33–Pro100. Over residues Pro42–Lys51 the composition is skewed to basic and acidic residues. The span at Pro54 to Asp65 shows a compositional bias: pro residues. A C-type lectin domain is found at Ile134–Glu247. Intrachain disulfides connect Cys155/Cys246 and Cys224/Cys238. Asn207 carries N-linked (GlcNAc...) asparagine glycosylation. Ca(2+) contacts are provided by Glu215, Ala217, Asn234, and Asp235.

This sequence belongs to the SFTPA family. As to quaternary structure, oligomeric complex of 6 set of homotrimers.

The protein resides in the secreted. Its subcellular location is the extracellular space. The protein localises to the extracellular matrix. It localises to the surface film. Its function is as follows. In presence of calcium ions, it binds to surfactant phospholipids and contributes to lower the surface tension at the air-liquid interface in the alveoli of the mammalian lung and is essential for normal respiration. Enhances the expression of MYO18A/SP-R210 on alveolar macrophages. The chain is Pulmonary surfactant-associated protein A (SFTPA1) from Macaca mulatta (Rhesus macaque).